We begin with the raw amino-acid sequence, 129 residues long: Small ribosomal subunit protein uS8 (129 aa).

It belongs to the universal ribosomal protein uS8 family. As to quaternary structure, part of the 30S ribosomal subunit.

One of the primary rRNA binding proteins, it binds directly to 16S rRNA central domain where it helps coordinate assembly of the platform of the 30S subunit. The sequence is that of Small ribosomal subunit protein uS8 from Archaeoglobus fulgidus (strain ATCC 49558 / DSM 4304 / JCM 9628 / NBRC 100126 / VC-16).